The following is a 263-amino-acid chain: Lens fiber major intrinsic protein (263 aa).

Over 1-9 the chain is Cytoplasmic; sequence MWELRSASF. Residues 10–29 form a helical membrane-spanning segment; that stretch reads WRAIFAEFFATLFYVFFGLG. Over 30–41 the chain is Extracellular; that stretch reads SSLRWAPGPLHV. A helical membrane pass occupies residues 42–59; it reads LQVALAFGLALATLVQTV. Residues 60 to 61 are Cytoplasmic-facing; that stretch reads GH. Residues 62 to 77 constitute an intramembrane region (discontinuously helical); sequence ISGAHVNPAVTFAFLV. The NPA 1 signature appears at 68–70; it reads NPA. Residues 78–82 are Cytoplasmic-facing; the sequence is GSQMS. The helical transmembrane segment at 83-106 threads the bilayer; the sequence is LLRAFCYIAAQLLGAVAGAAVLYS. The Extracellular segment spans residues 107-127; that stretch reads VTPPAVRGNLALNTLHAGVSV. Residues 128-148 form a helical membrane-spanning segment; that stretch reads GQATTVEIFLTLQFVLCIFAT. Residues 149–156 are Cytoplasmic-facing; that stretch reads YDERRNGR. Residues 157–175 traverse the membrane as a helical segment; the sequence is MGSVALAVGFSLTLGHLFG. Topologically, residues 176 to 178 are extracellular; it reads MYY. Residues 179–193 constitute an intramembrane region (discontinuously helical); that stretch reads TGAGMNPARSFAPAI. The short motif at 184–186 is the NPA 2 element; the sequence is NPA. Topologically, residues 194–200 are extracellular; the sequence is LTRNFSN. Residues 201–222 traverse the membrane as a helical segment; it reads HWVYWVGPIIGGGLGSLLYDFL. The Cytoplasmic portion of the chain corresponds to 223–263; it reads LFPRLKSVSERLSILKGARPSDSNGQPEGTGEPVELKTQAL. Residues 227-237 are interaction with CALM; it reads LKSVSERLSIL. Phosphoserine is present on residues S235, S243, and S245. A disordered region spans residues 240 to 263; it reads ARPSDSNGQPEGTGEPVELKTQAL. N246 carries the post-translational modification Deamidated asparagine.

It belongs to the MIP/aquaporin (TC 1.A.8) family. As to quaternary structure, homotetramer; each monomer provides an independent water pore. Two homotetramers on opposing membranes can dimerize, forming a cell-cell junction. Interacts with CALM; the calcium-calmodulin/CALM complex interacts with the cytoplasmic domains of two aquaporins, leading to channel closure. Interacts with BFSP1 (via C-terminus); prevents calcium-dependent inhibition of the water channel activity. Post-translationally, subject to partial proteolytic cleavage in the eye lens core. Partial proteolysis promotes interactions between tetramers from adjoining membranes. Fatty acylated at Met-1 and Lys-238. The acyl modifications, in decreasing order of ion abundance, are: oleoyl (C18:1) &gt; palmitoyl (C16:0) &gt; stearoyl (C18:0) &gt; eicosenoyl (C20:1) &gt; dihomo-gamma-linolenoyl (C20:3) &gt; palmitoleoyl (C16:1) &gt; eicosadienoyl (C20:2).

The protein resides in the cell membrane. It localises to the cell junction. The catalysed reaction is H2O(in) = H2O(out). With respect to regulation, the water channel activity is inhibited by calcium through calmodulin/CALM. Aquaporins form homotetrameric transmembrane channels, with each monomer independently mediating water transport across the plasma membrane along its osmotic gradient. Specifically expressed in lens fiber cells, this aquaporin is crucial for maintaining lens water homeostasis and transparency. Beyond water permeability, it also acts as a cell-to-cell adhesion molecule, forming thin junctions between lens fiber cells that are essential for maintaining the ordered structure and transparency of the lens. In Rattus norvegicus (Rat), this protein is Lens fiber major intrinsic protein.